A 301-amino-acid polypeptide reads, in one-letter code: Probable aspartoacylase (301 aa).

Zn(2+)-binding residues include H13 and E16. Substrate contacts are provided by residues R54 and 61–62 (NR). Residue H105 participates in Zn(2+) binding. Substrate-binding residues include E163 and Y273.

This sequence belongs to the AspA/AstE family. Aspartoacylase subfamily. It depends on Zn(2+) as a cofactor.

It carries out the reaction an N-acyl-L-aspartate + H2O = a carboxylate + L-aspartate. This Prochlorococcus marinus (strain MIT 9301) protein is Probable aspartoacylase.